The primary structure comprises 774 residues: Beta-D-xylosidase 1 (774 aa).

Residues 1 to 30 form the signal peptide; that stretch reads MSCYNKALLIGNKVVVILVFLLCLVHSSES. Residue Asn-131 is glycosylated (N-linked (GlcNAc...) asparagine). The active site involves Asp-296. N-linked (GlcNAc...) asparagine glycosylation is present at Asn-658.

It belongs to the glycosyl hydrolase 3 family. In terms of tissue distribution, expressed in leaves, stems, seedlings, roots, inflorescences, siliques and developing seeds. Expressed in the vasculature of the roots, leaves, flowers and silique. Expressed in tissues undergoing secondary cell wall thickening such as protoxylem, metaxylem, intrafascicular cambium and fibers.

Its subcellular location is the secreted. The protein resides in the extracellular space. The protein localises to the extracellular matrix. The catalysed reaction is Hydrolysis of terminal non-reducing alpha-L-arabinofuranoside residues in alpha-L-arabinosides.. In terms of biological role, involved in pectic arabinan modification in mucilage secretory cells. Also acts as a beta-D-xylosidase during the remodeling of xylans in vascular development. This chain is Beta-D-xylosidase 1 (BXL1), found in Arabidopsis thaliana (Mouse-ear cress).